We begin with the raw amino-acid sequence, 393 residues long: 4-O-methyl-glucuronoyl methylesterase (393 aa).

The first 19 residues, 1–19, serve as a signal peptide directing secretion; the sequence is MKLSAALLAIAAFANVASA. Gln20 is subject to Pyrrolidone carboxylic acid. Cys22 and Cys56 are disulfide-bonded. N-linked (GlcNAc...) asparagine glycosylation is found at Asn103 and Asn168. Positions 203-208 match the GXSYXG catalytic site motif motif; the sequence is GCSRNG. Disulfide bonds link Cys204-Cys340 and Cys236-Cys312. The active-site Nucleophile is the Ser205. Residues Lys209, Gln251, Glu259, and Trp303 each contribute to the substrate site. The active-site Proton donor/acceptor is the His339.

It belongs to the carbohydrate esterase 15 (CE15) family.

The protein localises to the secreted. It carries out the reaction a 4-O-methyl-alpha-D-glucuronosyl ester derivative + H2O = 4-O-methyl-alpha-D-glucuronate derivative + an alcohol + H(+). Glucuronoyl esterase which may play a significant role in biomass degradation, as it is considered to disconnect hemicellulose from lignin through the hydrolysis of the ester bond between 4-O-methyl-D-glucuronic acid residues of glucuronoxylans and aromatic alcohols of lignin. This is 4-O-methyl-glucuronoyl methylesterase from Schizophyllum commune (strain H4-8 / FGSC 9210) (Split gill fungus).